Consider the following 1158-residue polypeptide: ATP-dependent helicase/deoxyribonuclease subunit B (1158 aa).

Residues 1 to 275 (MTLHAYLGRA…QYFNQLYRFN (275 aa)) form the UvrD-like helicase ATP-binding domain. An ATP-binding site is contributed by 8 to 15 (GRAGTGKS). Residues 269-583 (NQLYRFNNQD…SIGTMDLAKV (315 aa)) form the UvrD-like helicase C-terminal domain. The [4Fe-4S] cluster site is built by C784, C1112, C1115, and C1121.

Belongs to the helicase family. AddB/RexB type 1 subfamily. As to quaternary structure, heterodimer of AddA and AddB. Mg(2+) serves as cofactor. Requires [4Fe-4S] cluster as cofactor.

The heterodimer acts as both an ATP-dependent DNA helicase and an ATP-dependent, dual-direction single-stranded exonuclease. Recognizes the chi site generating a DNA molecule suitable for the initiation of homologous recombination. The AddB subunit has 5' -&gt; 3' nuclease activity but not helicase activity. This chain is ATP-dependent helicase/deoxyribonuclease subunit B, found in Staphylococcus aureus (strain COL).